The primary structure comprises 570 residues: Sulfite reductase [NADPH] hemoprotein beta-component (570 aa).

4 residues coordinate [4Fe-4S] cluster: Cys434, Cys440, Cys479, and Cys483. Cys483 contributes to the siroheme binding site.

This sequence belongs to the nitrite and sulfite reductase 4Fe-4S domain family. In terms of assembly, alpha(8)-beta(8). The alpha component is a flavoprotein, the beta component is a hemoprotein. The cofactor is siroheme. [4Fe-4S] cluster serves as cofactor.

It catalyses the reaction hydrogen sulfide + 3 NADP(+) + 3 H2O = sulfite + 3 NADPH + 4 H(+). It participates in sulfur metabolism; hydrogen sulfide biosynthesis; hydrogen sulfide from sulfite (NADPH route): step 1/1. Component of the sulfite reductase complex that catalyzes the 6-electron reduction of sulfite to sulfide. This is one of several activities required for the biosynthesis of L-cysteine from sulfate. The protein is Sulfite reductase [NADPH] hemoprotein beta-component of Escherichia fergusonii (strain ATCC 35469 / DSM 13698 / CCUG 18766 / IAM 14443 / JCM 21226 / LMG 7866 / NBRC 102419 / NCTC 12128 / CDC 0568-73).